We begin with the raw amino-acid sequence, 510 residues long: Histidine ammonia-lyase (510 aa).

Residues Ala143–Gly145 constitute a cross-link (5-imidazolinone (Ala-Gly)). Ser144 is modified (2,3-didehydroalanine (Ser)).

This sequence belongs to the PAL/histidase family. Post-translationally, contains an active site 4-methylidene-imidazol-5-one (MIO), which is formed autocatalytically by cyclization and dehydration of residues Ala-Ser-Gly.

It is found in the cytoplasm. It carries out the reaction L-histidine = trans-urocanate + NH4(+). It participates in amino-acid degradation; L-histidine degradation into L-glutamate; N-formimidoyl-L-glutamate from L-histidine: step 1/3. The sequence is that of Histidine ammonia-lyase from Aliivibrio fischeri (strain MJ11) (Vibrio fischeri).